We begin with the raw amino-acid sequence, 243 residues long: Proteasome subunit beta (243 aa).

2 stretches are compositionally biased toward basic and acidic residues: residues Met-1–Gly-11 and Asn-33–Lys-47. A propeptide spans Met-1–Gly-49 (removed in mature form; by autocatalysis). Positions Met-1–Thr-50 are disordered. Thr-50 (nucleophile) is an active-site residue. Residue Ser-129 is modified to Phosphoserine.

This sequence belongs to the peptidase T1B family. In terms of assembly, the 20S proteasome core is composed of 14 alpha and 14 beta subunits that assemble into four stacked heptameric rings, resulting in a barrel-shaped structure. The two inner rings, each composed of seven catalytic beta subunits, are sandwiched by two outer rings, each composed of seven alpha subunits. H.volcanii produces at least 2 types of 20S proteasomes: an alpha1-beta proteasome and a proteasome containing all three subunits (alpha1, alpha2, and beta) that appears to be asymmetrical with homo-oligomeric alpha1 and alpha2 rings positioned on separate ends. The catalytic chamber with the active sites is on the inside of the barrel. Has probably a gated structure, the ends of the cylinder being occluded by the N-termini of the alpha-subunits. Is likely capped at one or both ends by the proteasome regulatory ATPase, PAN.

It is found in the cytoplasm. It carries out the reaction Cleavage of peptide bonds with very broad specificity.. The formation of the proteasomal ATPase PAN-20S proteasome complex, via the docking of the C-termini of PAN into the intersubunit pockets in the alpha-rings, triggers opening of the gate for substrate entry. Interconversion between the open-gate and close-gate conformations leads to a dynamic regulation of the 20S proteasome proteolysis activity. In vitro, the chymotrypsin-like activity of the alpha1-beta proteasome is potently inhibited by carbobenzoxyl-leucinyl-leucinyl-leucinal-H (MG132) and significantly by N-acetyl-leucinyl-leucinyl-norleucinal-H (calpain inhibitor I). Functionally, component of the proteasome core, a large protease complex with broad specificity involved in protein degradation. The H.volcanii alpha1-beta proteasome is able to cleave oligopeptides after Phe, Tyr and Trp, poorly after Glu but not after Arg. Thus, displays chymotrypsin-like activity, low caspase-like activity but no trypsin-like activity. This Haloferax volcanii (strain ATCC 29605 / DSM 3757 / JCM 8879 / NBRC 14742 / NCIMB 2012 / VKM B-1768 / DS2) (Halobacterium volcanii) protein is Proteasome subunit beta.